We begin with the raw amino-acid sequence, 229 residues long: Potassium/proton antiporter CemA (229 aa).

A run of 3 helical transmembrane segments spans residues 7 to 27 (FTPL…SFSV), 107 to 127 (ILHF…SILG), and 189 to 209 (IISG…KYWI).

The protein belongs to the CemA family.

The protein localises to the plastid. Its subcellular location is the chloroplast inner membrane. It catalyses the reaction K(+)(in) + H(+)(out) = K(+)(out) + H(+)(in). Functionally, contributes to K(+)/H(+) antiport activity by supporting proton efflux to control proton extrusion and homeostasis in chloroplasts in a light-dependent manner to modulate photosynthesis. Prevents excessive induction of non-photochemical quenching (NPQ) under continuous-light conditions. Indirectly promotes efficient inorganic carbon uptake into chloroplasts. This is Potassium/proton antiporter CemA from Nicotiana tomentosiformis (Tobacco).